We begin with the raw amino-acid sequence, 309 residues long: Porphobilinogen deaminase (309 aa).

Residue C241 is modified to S-(dipyrrolylmethanemethyl)cysteine.

This sequence belongs to the HMBS family. Monomer. Requires dipyrromethane as cofactor.

The catalysed reaction is 4 porphobilinogen + H2O = hydroxymethylbilane + 4 NH4(+). It participates in porphyrin-containing compound metabolism; protoporphyrin-IX biosynthesis; coproporphyrinogen-III from 5-aminolevulinate: step 2/4. Functionally, tetrapolymerization of the monopyrrole PBG into the hydroxymethylbilane pre-uroporphyrinogen in several discrete steps. The polypeptide is Porphobilinogen deaminase (Bacillus cereus (strain B4264)).